We begin with the raw amino-acid sequence, 320 residues long: mRNA decay activator protein ZFP36 (320 aa).

The segment at methionine 1 to histidine 15 is necessary for nuclear export. The interval methionine 1 to threonine 93 is necessary and sufficient for the association with mRNA decay enzymes and mRNA decay activation. 2 necessary for localization of ARE-containing mRNAs to processing bodies (PBs) regions span residues methionine 1–leucine 167 and threonine 93–glutamate 320. Residues leucine 17 to arginine 50 form a disordered region. Over residues serine 27 to arginine 50 the composition is skewed to polar residues. Serine 53 bears the Phosphoserine; by MAPKAPK2 mark. Serine 59 carries the phosphoserine modification. Residues proline 64–glycine 68 form a P-P-P-P-G repeat. The segment covering proline 66 to threonine 85 has biased composition (pro residues). A disordered region spans residues proline 66–serine 95. Serine 81 and serine 83 each carry phosphoserine. Threonine 85 is subject to Phosphothreonine. Serine 86 is subject to Phosphoserine. Residues serine 86–serine 95 show a composition bias toward low complexity. A necessary for nuclear localization region spans residues threonine 88–proline 161. Residues threonine 90–alanine 166 form a necessary for RNA-binding region. C3H1-type zinc fingers lie at residues arginine 96 to glycine 124 and lysine 134 to threonine 162. The interval arginine 96–arginine 187 is necessary for interaction with PABPN1. Residues leucine 167–glutamate 320 are necessary for mRNA decay activation. Serine 179 is subject to Phosphoserine; by MAPKAPK2. Residues phenylalanine 180 to leucine 310 are disordered. A Phosphoserine modification is found at serine 190. One copy of the P-P-P-P-G repeat lies at proline 191–glycine 195. Low complexity predominate over residues serine 197–serine 209. Serine 211 is subject to Phosphoserine. Residues proline 212–glycine 216 form a P-P-P-P-G repeat. At serine 221 the chain carries Phosphoserine; by MAPK1; in vitro. A Phosphothreonine modification is found at threonine 251. A phosphoserine mark is found at serine 270 and serine 290. A compositionally biased stretch (low complexity) spans serine 280–serine 290. Positions proline 300–arginine 309 are enriched in pro residues. Positions proline 306–glutamate 320 are interaction with CNOT1. Serine 317 bears the Phosphoserine mark.

As to quaternary structure, associates with cytoplasmic CCR4-NOT and PAN2-PAN3 deadenylase complexes to trigger ARE-containing mRNA deadenylation and decay processes. Part of a mRNA decay activation complex at least composed of poly(A)-specific exoribonucleases CNOT6, EXOSC2 and XRN1 and mRNA-decapping enzymes DCP1A and DCP2. Associates with the RNA exosome complex. Interacts (via phosphorylated form) with 14-3-3 proteins; these interactions promote exclusion of ZFP36 from cytoplasmic stress granules in response to arsenite treatment in a MAPKAPK2-dependent manner and does not prevent CCR4-NOT deadenylase complex recruitment or ZFP36-induced ARE-containing mRNA deadenylation and decay processes. Interacts with 14-3-3 proteins; these interactions occur in response to rapamycin in an Akt-dependent manner. Interacts with AGO2 and AGO4. Interacts (via C-terminus) with CNOT1; this interaction occurs in a RNA-independent manner and induces mRNA deadenylation. Interacts (via N-terminus) with CNOT6. Interacts with CNOT6L. Interacts (via C-terminus) with CNOT7; this interaction occurs in a RNA-independent manner, induces mRNA deadenylation and is inhibited in a phosphorylation MAPKAPK2-dependent manner. Interacts (via unphosphorylated form) with CNOT8; this interaction occurs in a RNA-independent manner and is inhibited in a phosphorylation MAPKAPK2-dependent manner. Interacts with DCP1A. Interacts (via N-terminus) with DCP2. Interacts with EDC3. Interacts (via N-terminus) with EXOSC2. Interacts with heat shock 70 kDa proteins. Interacts with KHSRP; this interaction increases upon cytokine-induced treatment. Interacts with MAP3K4; this interaction enhances the association with SH3KBP1/CIN85. Interacts with MAPKAPK2; this interaction occurs upon skeletal muscle satellite cell activation. Interacts with NCL. Interacts with NUP214; this interaction increases upon lipopolysaccharide (LPS) stimulation. Interacts with PABPC1; this interaction occurs in a RNA-dependent manner. Interacts (via hypophosphorylated form) with PABPN1 (via RRM domain and C-terminal arginine-rich region); this interaction occurs in the nucleus in a RNA-independent manner, decreases in presence of single-stranded poly(A) RNA-oligomer and in a p38 MAPK-dependent-manner and inhibits nuclear poly(A) tail synthesis. Interacts with PAN2. Interacts (via C3H1-type zinc finger domains) with PKM. Interacts (via C3H1-type zinc finger domains) with nuclear RNA poly(A) polymerase. Interacts with PPP2CA; this interaction occurs in LPS-stimulated cells and induces ZFP36 dephosphorylation, and hence may promote ARE-containing mRNAs decay. Interacts (via C-terminus) with PRR5L (via C-terminus); this interaction may accelerate ZFP36-mediated mRNA decay during stress. Interacts (via C-terminus) with SFN; this interaction occurs in a phosphorylation-dependent manner. Interacts (via extreme C-terminal region) with SH3KBP1/CIN85 (via SH3 domains); this interaction enhances MAP3K4-induced phosphorylation of ZFP36 at Ser-59 and Ser-86 and does not alter neither ZFP36 binding to ARE-containing transcripts nor TNF-alpha mRNA decay. Interacts with XRN1. Interacts (via C-terminus and Ser-179 phosphorylated form) with YWHAB; this interaction occurs in a p38/MAPKAPK2-dependent manner, increases cytoplasmic localization of ZFP36 and protects ZFP36 from Ser-179 dephosphorylation by serine/threonine phosphatase 2A, and hence may be crucial for stabilizing ARE-containing mRNAs. Interacts (via phosphorylated form) with YWHAE. Interacts (via C-terminus) with YWHAG; this interaction occurs in a phosphorylation-dependent manner. Interacts with YWHAH; this interaction occurs in a phosphorylation-dependent manner. Interacts with YWHAQ; this interaction occurs in a phosphorylation-dependent manner. Interacts with (via C-terminus) YWHAZ; this interaction occurs in a phosphorylation-dependent manner. Does not interact with SH3KBP1. Interacts (via P-P-P-P-G repeats) with GIGYF2; the interaction is direct. Post-translationally, phosphorylated. Phosphorylation at serine and/or threonine residues occurs in a p38 MAPK- and MAPKAPK2-dependent manner. Phosphorylated by MAPKAPK2 at Ser-53 and Ser-179; phosphorylation increases its stability and cytoplasmic localization, promotes binding to 14-3-3 adapter proteins and inhibits the recruitment of cytoplasmic CCR4-NOT and PAN2-PAN3 deadenylase complexes to the mRNA decay machinery, thereby inhibiting ZFP36-induced ARE-containing mRNA deadenylation and decay processes. Phosphorylation by MAPKAPK2 does not impair ARE-containing RNA-binding. Phosphorylated in a MAPKAPK2- and p38 MAPK-dependent manner upon skeletal muscle satellite cell activation; this phosphorylation inhibits ZFP36-mediated mRNA decay activity, and hence stabilizes MYOD1 mRNA. Phosphorylated by MAPK1 upon mitogen stimulation. Phosphorylated at Ser-59 and Ser-86; these phosphorylations increase in a SH3KBP1-dependent manner. Phosphorylated at serine and threonine residues in a pyruvate kinase PKM- and p38 MAPK-dependent manner. Phosphorylation at Ser-53 may participate in the PKM-mediated degradation of ZFP36 in a p38 MAPK-dependent manner. Dephosphorylated by serine/threonine phosphatase 2A at Ser-179. Ubiquitinated; pyruvate kinase (PKM)-dependent ubiquitination leads to proteasomal degradation through a p38 MAPK signaling pathway.

The protein resides in the nucleus. It is found in the cytoplasm. Its subcellular location is the cytoplasmic granule. It localises to the P-body. Zinc-finger RNA-binding protein that destabilizes numerous cytoplasmic AU-rich element (ARE)-containing mRNA transcripts by promoting their poly(A) tail removal or deadenylation, and hence provide a mechanism for attenuating protein synthesis. Acts as an 3'-untranslated region (UTR) ARE mRNA-binding adapter protein to communicate signaling events to the mRNA decay machinery. Recruits deadenylase CNOT7 (and probably the CCR4-NOT complex) via association with CNOT1, and hence promotes ARE-mediated mRNA deadenylation. Also functions by recruiting components of the cytoplasmic RNA decay machinery to the bound ARE-containing mRNAs. Self regulates by destabilizing its own mRNA. Binds to 3'-UTR ARE of numerous mRNAs. Also binds to ARE of its own mRNA. Plays a role in anti-inflammatory responses; suppresses tumor necrosis factor (TNF)-alpha production by stimulating ARE-mediated TNF-alpha mRNA decay and several other inflammatory ARE-containing mRNAs in interferon (IFN)- and/or lipopolysaccharide (LPS)-induced macrophages. Also plays a role in the regulation of dendritic cell maturation at the post-transcriptional level, and hence operates as part of a negative feedback loop to limit the inflammatory response. Promotes ARE-mediated mRNA decay of hypoxia-inducible factor HIF1A mRNA during the response of endothelial cells to hypoxia. Positively regulates early adipogenesis of preadipocytes by promoting ARE-mediated mRNA decay of immediate early genes (IEGs). Negatively regulates hematopoietic/erythroid cell differentiation by promoting ARE-mediated mRNA decay of the transcription factor STAT5B mRNA. Plays a role in maintaining skeletal muscle satellite cell quiescence by promoting ARE-mediated mRNA decay of the myogenic determination factor MYOD1 mRNA. Also associates with and regulates the expression of non-ARE-containing target mRNAs at the post-transcriptional level, such as MHC class I mRNAs. Participates in association with argonaute RISC catalytic components in the ARE-mediated mRNA decay mechanism; assists microRNA (miRNA) targeting ARE-containing mRNAs. May also play a role in the regulation of cytoplasmic mRNA decapping; enhances decapping of ARE-containing RNAs, in vitro. Involved in the delivery of target ARE-mRNAs to processing bodies (PBs). In addition to its cytosolic mRNA-decay function, affects nuclear pre-mRNA processing. Negatively regulates nuclear poly(A)-binding protein PABPN1-stimulated polyadenylation activity on ARE-containing pre-mRNA during LPS-stimulated macrophages. Also involved in the regulation of stress granule (SG) and P-body (PB) formation and fusion. Plays a role in the regulation of keratinocyte proliferation, differentiation and apoptosis. Plays a role as a tumor suppressor by inhibiting cell proliferation in breast cancer cells. This Rattus norvegicus (Rat) protein is mRNA decay activator protein ZFP36.